The primary structure comprises 442 residues: D-galactonate dehydratase family member SSBG_02010 (442 aa).

Mg(2+) is bound at residue Asp246. His248 contributes to the D-arabinonate binding site. Mg(2+)-binding residues include Glu272 and Glu298. Residues Glu298, Arg319, His348, and Glu375 each contribute to the D-arabinonate site.

The protein belongs to the mandelate racemase/muconate lactonizing enzyme family. GalD subfamily.

Its function is as follows. Has no detectable activity with D-mannonate and with a panel of 70 other acid sugars (in vitro), in spite of the conservation of the residues that are expected to be important for catalytic activity and cofactor binding. May have evolved a divergent function. This Streptomyces sp. (strain SPB074) protein is D-galactonate dehydratase family member SSBG_02010.